The sequence spans 167 residues: Pathogenesis-related protein PR-1 type (167 aa).

The N-terminal stretch at 1–29 (MAHNHWCNLFSVALVCVVALVMVQYSVAQ) is a signal peptide. One can recognise an SCP domain in the interval 36-155 (VDAHNAARSA…NGAWFITCNY (120 aa)). 3 disulfide bridges follow: Cys-72/Cys-144, Cys-117/Cys-123, and Cys-139/Cys-153.

Belongs to the CRISP family.

Probably involved in the defense reaction of plants against pathogens. This Sambucus nigra (European elder) protein is Pathogenesis-related protein PR-1 type.